A 185-amino-acid chain; its full sequence is Ribosome-recycling factor (185 aa).

The protein belongs to the RRF family.

The protein localises to the cytoplasm. In terms of biological role, responsible for the release of ribosomes from messenger RNA at the termination of protein biosynthesis. May increase the efficiency of translation by recycling ribosomes from one round of translation to another. This chain is Ribosome-recycling factor, found in Salmonella paratyphi A (strain ATCC 9150 / SARB42).